The primary structure comprises 404 residues: Serine/threonine transporter SstT (404 aa).

8 helical membrane-spanning segments follow: residues 17-37 (IGIGVVIGVMLGILAPDLTGF), 39-59 (ILGKLFVGGLKAIAPLLVFAL), 75-95 (MTLIIFLYLFGTFASALVAVL), 138-158 (ALATANYIGVLSWAIIFGLAL), 179-199 (IVVWIINLAPIGIMSLVFTTI), 212-232 (FLILVLVGTMVFVALVVNPLI), 287-307 (IPLGATINMGGAAITINVLTL), and 313-333 (FGIPIDFLTALLLSVVAAVSA).

The protein belongs to the dicarboxylate/amino acid:cation symporter (DAACS) (TC 2.A.23) family.

The protein localises to the cell membrane. The catalysed reaction is L-serine(in) + Na(+)(in) = L-serine(out) + Na(+)(out). It carries out the reaction L-threonine(in) + Na(+)(in) = L-threonine(out) + Na(+)(out). Its function is as follows. Involved in the import of serine and threonine into the cell, with the concomitant import of sodium (symport system). The sequence is that of Serine/threonine transporter SstT from Streptococcus pyogenes serotype M5 (strain Manfredo).